A 114-amino-acid chain; its full sequence is uncharacterized protein (114 aa).

2 helical membrane passes run 14–34 (VMSA…CFLL) and 75–95 (VIII…HPVA).

Its subcellular location is the membrane. This is an uncharacterized protein from Homo sapiens (Human).